A 75-amino-acid polypeptide reads, in one-letter code: uncharacterized protein (75 aa).

A helical membrane pass occupies residues 4-26 (PSLLFLGFSGVLAFGEVGWVGVY).

It is found in the membrane. This is an uncharacterized protein from Treponema pallidum (strain Nichols).